The sequence spans 270 residues: Probable septum site-determining protein MinC (270 aa).

Residues 105-129 (DRRAPSSKAADEAPVQQAEPAAPAA) are disordered. Positions 116-129 (EAPVQQAEPAAPAA) are enriched in low complexity.

This sequence belongs to the MinC family. In terms of assembly, interacts with MinD and FtsZ.

Its function is as follows. Cell division inhibitor that blocks the formation of polar Z ring septums. Rapidly oscillates between the poles of the cell to destabilize FtsZ filaments that have formed before they mature into polar Z rings. Prevents FtsZ polymerization. The polypeptide is Probable septum site-determining protein MinC (Burkholderia pseudomallei (strain 668)).